The primary structure comprises 487 residues: Cyclic AMP-dependent transcription factor ATF-2 (487 aa).

Residues phenylalanine 7 to histidine 31 form a C2H2-type zinc finger. 2 disordered regions span residues glutamate 106–glutamate 132 and glutamine 267–lysine 354. Positions glutamine 298–proline 319 are enriched in low complexity. Basic and acidic residues predominate over residues alanine 328 to arginine 345. In terms of domain architecture, bZIP spans aspartate 334–histidine 397. A basic motif region spans residues lysine 336 to lysine 356. The interval leucine 362–leucine 390 is leucine-zipper. The short motif at valine 387–alanine 396 is the Nuclear export signal element. Residues lysine 407 to serine 487 form a disordered region. The span at valine 425–histidine 436 shows a compositional bias: polar residues. The span at serine 437–serine 449 shows a compositional bias: low complexity. The span at serine 457 to glutamate 468 shows a compositional bias: polar residues.

It belongs to the bZIP family. ATF subfamily. In terms of assembly, binds DNA as a dimer and can form a homodimer in the absence of DNA. Can form a heterodimer with JUN. Heterodimerization is essential for its transcriptional activity.

Its subcellular location is the nucleus. The protein resides in the cytoplasm. It localises to the mitochondrion outer membrane. Its function is as follows. Transcriptional activator which regulates the transcription of various genes, including those involved in anti-apoptosis, cell growth, and DNA damage response. Dependent on its binding partner, binds to CRE (cAMP response element) consensus sequences (5'-TGACGTCA-3') or to AP-1 (activator protein 1) consensus sequences (5'-TGACTCA-3'). This is Cyclic AMP-dependent transcription factor ATF-2 (ATF2) from Gallus gallus (Chicken).